Reading from the N-terminus, the 410-residue chain is Serine/threonine transporter SstT (410 aa).

9 consecutive transmembrane segments (helical) span residues 11–31, 45–65, 79–99, 138–158, 179–199, 214–234, 285–305, 327–347, and 353–373; these read VSLV…AVTV, FVGA…ISAI, ILIL…VASF, ALLN…GIAL, IVTW…FDAI, LAVL…LIVF, ISIP…ISVL, VLSA…LLLI, and LFGI…IIGV.

It belongs to the dicarboxylate/amino acid:cation symporter (DAACS) (TC 2.A.23) family.

Its subcellular location is the cell membrane. The catalysed reaction is L-serine(in) + Na(+)(in) = L-serine(out) + Na(+)(out). It carries out the reaction L-threonine(in) + Na(+)(in) = L-threonine(out) + Na(+)(out). Its function is as follows. Involved in the import of serine and threonine into the cell, with the concomitant import of sodium (symport system). In Geobacillus thermodenitrificans (strain NG80-2), this protein is Serine/threonine transporter SstT.